An 88-amino-acid chain; its full sequence is DNA-directed RNA polymerase subunit omega (88 aa).

This sequence belongs to the RNA polymerase subunit omega family. The RNAP catalytic core consists of 2 alpha, 1 beta, 1 beta' and 1 omega subunit. When a sigma factor is associated with the core the holoenzyme is formed, which can initiate transcription.

It catalyses the reaction RNA(n) + a ribonucleoside 5'-triphosphate = RNA(n+1) + diphosphate. Its function is as follows. Promotes RNA polymerase assembly. Latches the N- and C-terminal regions of the beta' subunit thereby facilitating its interaction with the beta and alpha subunits. The sequence is that of DNA-directed RNA polymerase subunit omega from Anaeromyxobacter dehalogenans (strain 2CP-1 / ATCC BAA-258).